The chain runs to 141 residues: UPF0179 protein Cmaq_1008 (141 aa).

The protein belongs to the UPF0179 family.

This is UPF0179 protein Cmaq_1008 from Caldivirga maquilingensis (strain ATCC 700844 / DSM 13496 / JCM 10307 / IC-167).